The primary structure comprises 506 residues: Maturase K (506 aa).

It belongs to the intron maturase 2 family. MatK subfamily.

It is found in the plastid. It localises to the chloroplast. Its function is as follows. Usually encoded in the trnK tRNA gene intron. Probably assists in splicing its own and other chloroplast group II introns. This Atractylodes lancea (Atractylodes japonica) protein is Maturase K.